The chain runs to 237 residues: Splicing factor U2AF 35 kDa subunit (237 aa).

N-acetylalanine is present on Ala-2. The C3H1-type 1 zinc finger occupies 12 to 40 (EKDKVNCSFYFKIGACRHGDRCSRLHNKP). An N6-methyllysine modification is found at Lys-39. A phosphoserine mark is found at Ser-61 and Ser-145. One can recognise an RRM domain in the interval 65 to 147 (LRCAVSDVEM…QPIHAELSPV (83 aa)). The C3H1-type 2 zinc-finger motif lies at 149–176 (DFREACCRQYEMGECTRGGFCNFMHLKP). Arg-165 bears the Omega-N-methylarginine mark. A disordered region spans residues 185 to 237 (LYGRRRKKHRSRSRSRERRSRSRDRGRGGGGGGGGGRERDRRRSRDRERSGRF). Basic residues predominate over residues 188-208 (RRRKKHRSRSRSRERRSRSRD). Residues 220-237 (GRERDRRRSRDRERSGRF) show a composition bias toward basic and acidic residues.

This sequence belongs to the splicing factor SR family. Identified in the spliceosome C complex. Heterodimer with U2AF2. Interacts (via RS domain) with PHF5A (via N-terminus). Interacts with ZRANB2. Interacts with SDE2. Interacts with SF3B1.

The protein localises to the nucleus. The protein resides in the nucleus speckle. Plays a critical role in both constitutive and enhancer-dependent splicing by mediating protein-protein interactions and protein-RNA interactions required for accurate 3'-splice site selection. Recruits U2 snRNP to the branch point. Directly mediates interactions between U2AF2 and proteins bound to the enhancers and thus may function as a bridge between U2AF2 and the enhancer complex to recruit it to the adjacent intron. The polypeptide is Splicing factor U2AF 35 kDa subunit (U2AF1) (Bos taurus (Bovine)).